Consider the following 287-residue polypeptide: Probable WRKY transcription factor 57 (287 aa).

The segment covering Thr-86 to Ser-99 has biased composition (low complexity). Residues Thr-86–Phe-137 are disordered. Positions Glu-122–Gln-132 are enriched in basic residues. Positions Ser-141–Ile-206 form a DNA-binding region, WRKY. A disordered region spans residues Asp-248–Pro-287. The span at Glu-262 to Ser-271 shows a compositional bias: polar residues.

It belongs to the WRKY group II-c family.

It localises to the nucleus. Functionally, transcription factor. Interacts specifically with the W box (5'-(T)TGAC[CT]-3'), a frequently occurring elicitor-responsive cis-acting element. The protein is Probable WRKY transcription factor 57 (WRKY57) of Arabidopsis thaliana (Mouse-ear cress).